Reading from the N-terminus, the 258-residue chain is Imidazole glycerol phosphate synthase subunit HisF (258 aa).

Active-site residues include Asp-11 and Asp-130.

The protein belongs to the HisA/HisF family. As to quaternary structure, heterodimer of HisH and HisF.

The protein localises to the cytoplasm. It catalyses the reaction 5-[(5-phospho-1-deoxy-D-ribulos-1-ylimino)methylamino]-1-(5-phospho-beta-D-ribosyl)imidazole-4-carboxamide + L-glutamine = D-erythro-1-(imidazol-4-yl)glycerol 3-phosphate + 5-amino-1-(5-phospho-beta-D-ribosyl)imidazole-4-carboxamide + L-glutamate + H(+). It functions in the pathway amino-acid biosynthesis; L-histidine biosynthesis; L-histidine from 5-phospho-alpha-D-ribose 1-diphosphate: step 5/9. Functionally, IGPS catalyzes the conversion of PRFAR and glutamine to IGP, AICAR and glutamate. The HisF subunit catalyzes the cyclization activity that produces IGP and AICAR from PRFAR using the ammonia provided by the HisH subunit. This is Imidazole glycerol phosphate synthase subunit HisF from Bradyrhizobium sp. (strain BTAi1 / ATCC BAA-1182).